Reading from the N-terminus, the 122-residue chain is MICOS complex subunit MIC13 homolog QIL1 (122 aa).

The helical transmembrane segment at 9 to 25 threads the bilayer; it reads GGLVAATVYYTQKVGIW.

Belongs to the MICOS complex subunit Mic13 family. In terms of assembly, component of the mitochondrial contact site and cristae organizing system (MICOS) complex.

Its subcellular location is the mitochondrion inner membrane. Functionally, component of the MICOS complex, a large protein complex of the mitochondrial inner membrane that plays crucial roles in the maintenance of crista junctions, inner membrane architecture, and formation of contact sites to the outer membrane. This Drosophila melanogaster (Fruit fly) protein is MICOS complex subunit MIC13 homolog QIL1.